The following is a 142-amino-acid chain: HTH-type transcriptional regulator MntR (142 aa).

Residues 1–63 (MPTPSMEDYI…YEKYRGLILT (63 aa)) enclose the HTH dtxR-type domain. Mn(2+)-binding residues include aspartate 8, glutamate 11, histidine 77, glutamate 99, glutamate 102, and histidine 103.

The protein belongs to the DtxR/MntR family. Homodimer.

Its subcellular location is the cytoplasm. Its activity is regulated as follows. DNA binding is strongly activated by Mn(2+). Central regulator of manganese homeostasis. In Listeria welshimeri serovar 6b (strain ATCC 35897 / DSM 20650 / CCUG 15529 / CIP 8149 / NCTC 11857 / SLCC 5334 / V8), this protein is HTH-type transcriptional regulator MntR.